The following is a 151-amino-acid chain: Coiled-coil-helix-coiled-coil-helix domain-containing protein 2 (151 aa).

2 disordered regions span residues 1–50 (MPRG…AAAP) and 77–111 (GHAI…AQQQ). Residues 10 to 26 (SRMAPPASRAPQMRAAP) show a composition bias toward low complexity. The span at 27-38 (RPAPVAQPPAAA) shows a compositional bias: pro residues. Low complexity-rich tracts occupy residues 39–50 (PPSAVGSSAAAP) and 100–111 (QEPQGTQPAQQQ). The 41-residue stretch at 111–151 (QQPCLYEIKQFLECAQNQGDIKLCEGFNEVLKQCRLANGLA) folds into the CHCH domain. Short sequence motifs (cx9C motif) lie at residues 114 to 124 (CLYEIKQFLEC) and 134 to 144 (CEGFNEVLKQC). 2 disulfides stabilise this stretch: Cys114/Cys144 and Cys124/Cys134.

Interacts with RBPJ.

It is found in the nucleus. The protein resides in the mitochondrion. The protein localises to the mitochondrion intermembrane space. Its function is as follows. Transcription factor. Binds to the oxygen responsive element of COX4I2 and activates its transcription under hypoxia conditions (4% oxygen), as well as normoxia conditions (20% oxygen). This is Coiled-coil-helix-coiled-coil-helix domain-containing protein 2 (CHCHD2) from Homo sapiens (Human).